A 525-amino-acid polypeptide reads, in one-letter code: Light-independent protochlorophyllide reductase subunit B (525 aa).

Position 36 (Asp36) interacts with [4Fe-4S] cluster. The active-site Proton donor is the Asp286. Residue 421-422 (GL) participates in substrate binding.

It belongs to the ChlB/BchB/BchZ family. In terms of assembly, protochlorophyllide reductase is composed of three subunits; ChlL, ChlN and ChlB. Forms a heterotetramer of two ChlB and two ChlN subunits. Requires [4Fe-4S] cluster as cofactor.

It catalyses the reaction chlorophyllide a + oxidized 2[4Fe-4S]-[ferredoxin] + 2 ADP + 2 phosphate = protochlorophyllide a + reduced 2[4Fe-4S]-[ferredoxin] + 2 ATP + 2 H2O. It functions in the pathway porphyrin-containing compound metabolism; chlorophyll biosynthesis (light-independent). Its function is as follows. Component of the dark-operative protochlorophyllide reductase (DPOR) that uses Mg-ATP and reduced ferredoxin to reduce ring D of protochlorophyllide (Pchlide) to form chlorophyllide a (Chlide). This reaction is light-independent. The NB-protein (ChlN-ChlB) is the catalytic component of the complex. The sequence is that of Light-independent protochlorophyllide reductase subunit B from Prochlorococcus marinus (strain NATL2A).